Reading from the N-terminus, the 125-residue chain is Nascent polypeptide-associated complex protein (125 aa).

Residues 9-76 (PRMMKQMQKM…SKNTSKTAEK (68 aa)) form the NAC-A/B domain.

This sequence belongs to the NAC-alpha family. Homodimer. Interacts with the ribosome. Binds ribosomal RNA.

In terms of biological role, contacts the emerging nascent chain on the ribosome. In Methanococcus vannielii (strain ATCC 35089 / DSM 1224 / JCM 13029 / OCM 148 / SB), this protein is Nascent polypeptide-associated complex protein.